A 349-amino-acid polypeptide reads, in one-letter code: S-adenosylmethionine:tRNA ribosyltransferase-isomerase (349 aa).

It belongs to the QueA family. As to quaternary structure, monomer.

It localises to the cytoplasm. It carries out the reaction 7-aminomethyl-7-carbaguanosine(34) in tRNA + S-adenosyl-L-methionine = epoxyqueuosine(34) in tRNA + adenine + L-methionine + 2 H(+). Its pathway is tRNA modification; tRNA-queuosine biosynthesis. In terms of biological role, transfers and isomerizes the ribose moiety from AdoMet to the 7-aminomethyl group of 7-deazaguanine (preQ1-tRNA) to give epoxyqueuosine (oQ-tRNA). The polypeptide is S-adenosylmethionine:tRNA ribosyltransferase-isomerase (Pseudomonas entomophila (strain L48)).